We begin with the raw amino-acid sequence, 486 residues long: Putative protease Do-like 13 (486 aa).

The interval 44 to 229 (KINTFSSKPN…IPAPVVKHFI (186 aa)) is serine protease. Catalysis depends on charge relay system residues His83, Asp114, and Ser192. The 94-residue stretch at 241–334 (FCSLNLSYQH…TILLKILREG (94 aa)) folds into the PDZ domain.

The protein belongs to the peptidase S1C family.

In terms of biological role, putative serine protease. In Arabidopsis thaliana (Mouse-ear cress), this protein is Putative protease Do-like 13 (DEGP13).